The following is a 237-amino-acid chain: Lipoprotein-releasing system ATP-binding protein LolD (237 aa).

Residues 8–236 form the ABC transporter domain; sequence ISVTDLRKTF…EAIKKSVKTA (229 aa). Residue 40-47 participates in ATP binding; the sequence is GKSGSGKS.

The protein belongs to the ABC transporter superfamily. Lipoprotein translocase (TC 3.A.1.125) family. As to quaternary structure, the complex is composed of two ATP-binding proteins (LolD) and two transmembrane proteins (LolC and LolE).

It localises to the cell inner membrane. Its function is as follows. Part of the ABC transporter complex LolCDE involved in the translocation of mature outer membrane-directed lipoproteins, from the inner membrane to the periplasmic chaperone, LolA. Responsible for the formation of the LolA-lipoprotein complex in an ATP-dependent manner. This Leptospira interrogans serogroup Icterohaemorrhagiae serovar Lai (strain 56601) protein is Lipoprotein-releasing system ATP-binding protein LolD.